The primary structure comprises 124 residues: Large ribosomal subunit protein bL20 (124 aa).

It belongs to the bacterial ribosomal protein bL20 family.

Binds directly to 23S ribosomal RNA and is necessary for the in vitro assembly process of the 50S ribosomal subunit. It is not involved in the protein synthesizing functions of that subunit. The protein is Large ribosomal subunit protein bL20 of Ehrlichia canis (strain Jake).